Here is a 708-residue protein sequence, read N- to C-terminus: Ion-translocating oxidoreductase complex subunit C (708 aa).

4Fe-4S ferredoxin-type domains follow at residues 369 to 397 (GEPQEEQSCIRCSACADACPADLLPQQLY) and 407 to 436 (KATTHNIADCIECGACAWVCPSNIPLVQYF). Residues Cys-377, Cys-380, Cys-383, Cys-387, Cys-416, Cys-419, Cys-422, and Cys-426 each coordinate [4Fe-4S] cluster. The interval 630 to 682 (AKARKLEQQQANAEPEEQIDPRKAAVEAAIARAKARKLEQQQANAEPEEQIDP) is disordered.

It belongs to the 4Fe4S bacterial-type ferredoxin family. RnfC subfamily. As to quaternary structure, the complex is composed of six subunits: RsxA, RsxB, RsxC, RsxD, RsxE and RsxG. [4Fe-4S] cluster is required as a cofactor.

The protein localises to the cell inner membrane. Part of a membrane-bound complex that couples electron transfer with translocation of ions across the membrane. Required to maintain the reduced state of SoxR. The sequence is that of Ion-translocating oxidoreductase complex subunit C from Escherichia coli (strain UTI89 / UPEC).